A 180-amino-acid polypeptide reads, in one-letter code: MMPRLQEKYEKEVVSALMDKFGYKNIMEVPKLEKIVINMGVGEAKENQKSLEAAVEDLAKITGQKPILTKAKKSVANFKIREDMPLGCKVTLRKQNMYEFADKLINVALPRVRDFSGVSSKSFDGRGNYAIGIKEQLIFPEIEFDKIDKIRGMDIIFVTTAKTDEEARELLRFLGMPFAR.

The protein belongs to the universal ribosomal protein uL5 family. In terms of assembly, part of the 50S ribosomal subunit; part of the 5S rRNA/L5/L18/L25 subcomplex. Contacts the 5S rRNA and the P site tRNA. Forms a bridge to the 30S subunit in the 70S ribosome.

Its function is as follows. This is one of the proteins that bind and probably mediate the attachment of the 5S RNA into the large ribosomal subunit, where it forms part of the central protuberance. In the 70S ribosome it contacts protein S13 of the 30S subunit (bridge B1b), connecting the 2 subunits; this bridge is implicated in subunit movement. Contacts the P site tRNA; the 5S rRNA and some of its associated proteins might help stabilize positioning of ribosome-bound tRNAs. The polypeptide is Large ribosomal subunit protein uL5 (Clostridium botulinum (strain ATCC 19397 / Type A)).